The sequence spans 460 residues: MPKLTYKSVSEISGPLLFVENVPNAAYNEMVDIELDNGETRQGQVLDTRKGLAIVQIFGATTGIGTEGTRVKFRGETARLPISEDMLGRVFNGIGEPIDGGPEILAKERMEITSNAINPYSREEPSEFIETGISAIDGMNTLVRGQKLPIFSGSGLPHNQLAAQIARQAKVLDSSENFAVVFGAMGITSEEANYFTNQFRETGALSRSVMFLNLSSDPSMERIILPRIALTTAEYLAFQKEMHILVILTDMTNYCEALREISSAREEVPGRRGYPGYMYTDLSTIYERAGKLKGNNGSITQIPILTMPGDDITHPVPDLTGYITEGQVVVSRDLNRKGIYPGIDVLLSLSRLMNQGIGKGHTREDHRGLADQLYSAYASGKDLRSLTAIVGEEALSQNDRKYLRFADTFEERYLKQDFFEDRSIEDTLNLGWELLADLPESDMKRVKPDHIKKYGKWKKE.

This sequence belongs to the ATPase alpha/beta chains family. In terms of assembly, has multiple subunits with at least A(3), B(3), C, D, E, F, H, I and proteolipid K(x).

It is found in the cell membrane. In terms of biological role, component of the A-type ATP synthase that produces ATP from ADP in the presence of a proton gradient across the membrane. The B chain is a regulatory subunit. The sequence is that of A-type ATP synthase subunit B from Thermoplasma volcanium (strain ATCC 51530 / DSM 4299 / JCM 9571 / NBRC 15438 / GSS1).